The following is a 129-amino-acid chain: Thylakoid-associated single-stranded DNA-binding protein slr1034 (129 aa).

One can recognise an SSB domain in the interval 1 to 100; sequence MNSFVLMATV…LTASRISLVD (100 aa). Residues 99 to 129 form a disordered region; it reads VDSGNGINPGELSSPPEPEAVDLSNTDDIPF.

In terms of assembly, homotetramer.

Its subcellular location is the cellular thylakoid membrane. This Synechocystis sp. (strain ATCC 27184 / PCC 6803 / Kazusa) protein is Thylakoid-associated single-stranded DNA-binding protein slr1034.